Here is a 506-residue protein sequence, read N- to C-terminus: Chromosomal replication initiator protein DnaA (506 aa).

A domain I, interacts with DnaA modulators region spans residues 1–77 (MECATTATTP…IWAEESGAKR (77 aa)). Positions 77–162 (RRVDLAVRNA…AVAGDVASGS (86 aa)) are domain II. Composition is skewed to basic and acidic residues over residues 103-112 (TERTDMHSGD) and 121-142 (SDGRSTDARGADGRGSDARAVE). Residues 103-142 (TERTDMHSGDTRQQSARISDGRSTDARGADGRGSDARAVE) form a disordered region. The tract at residues 163–384 (PLDARLTFET…GALNKLLAFN (222 aa)) is domain III, AAA+ region. Glycine 210, glycine 212, lysine 213, and threonine 214 together coordinate ATP. The tract at residues 385–506 (QLTGEPVTLE…EVLKRLALEA (122 aa)) is domain IV, binds dsDNA.

The protein belongs to the DnaA family. In terms of assembly, oligomerizes as a right-handed, spiral filament on DNA at oriC.

The protein resides in the cytoplasm. Plays an essential role in the initiation and regulation of chromosomal replication. ATP-DnaA binds to the origin of replication (oriC) to initiate formation of the DNA replication initiation complex once per cell cycle. Binds the DnaA box (a 9 base pair repeat at the origin) and separates the double-stranded (ds)DNA. Forms a right-handed helical filament on oriC DNA; dsDNA binds to the exterior of the filament while single-stranded (ss)DNA is stabiized in the filament's interior. The ATP-DnaA-oriC complex binds and stabilizes one strand of the AT-rich DNA unwinding element (DUE), permitting loading of DNA polymerase. After initiation quickly degrades to an ADP-DnaA complex that is not apt for DNA replication. Binds acidic phospholipids. This chain is Chromosomal replication initiator protein DnaA, found in Xanthobacter autotrophicus (strain ATCC BAA-1158 / Py2).